A 318-amino-acid chain; its full sequence is MSVLLIALFSLILLLALLGAAGVFTWGERRLLGFLQERLGPNRVGPFGFLQWVADTLKLLTKEDAPPAGADLAAYRLAPALAAFPMLAGFGVVAFAPRLVISDLDVGVLFVMGMLALTVWALVLGAWGSRNRYAMLGGLRAAAQMLAYESFLGLSLMGCVLLAGSFRMGDIVAAQEGGLWFILLQPLGAALFFLAGLAAAHRLPFDLQESEQDLVAGFMTEYSGMSFALFFLGEYLAILLVAALFTTLFLGGWAGPILPGPVWFGLKVAAISVVFVWLRAALPRPRYDQLISFAWKVALPLALLNLLVTAWIAVGRAA.

A run of 9 helical transmembrane segments spans residues 4 to 24, 77 to 97, 106 to 126, 146 to 166, 179 to 199, 214 to 234, 238 to 258, 262 to 282, and 293 to 313; these read LLIA…AGVF, LAPA…AFAP, VGVL…VLGA, LAYE…AGSF, LWFI…GLAA, LVAG…FLGE, ILLV…GPIL, VWFG…RAAL, and FAWK…AWIA.

Belongs to the complex I subunit 1 family. In terms of assembly, NDH-1 is composed of 14 different subunits. Subunits NuoA, H, J, K, L, M, N constitute the membrane sector of the complex.

The protein resides in the cell inner membrane. The enzyme catalyses a quinone + NADH + 5 H(+)(in) = a quinol + NAD(+) + 4 H(+)(out). Its function is as follows. NDH-1 shuttles electrons from NADH, via FMN and iron-sulfur (Fe-S) centers, to quinones in the respiratory chain. The immediate electron acceptor for the enzyme in this species is believed to be ubiquinone. Couples the redox reaction to proton translocation (for every two electrons transferred, four hydrogen ions are translocated across the cytoplasmic membrane), and thus conserves the redox energy in a proton gradient. This subunit may bind ubiquinone. The chain is NADH-quinone oxidoreductase subunit H 2 from Cereibacter sphaeroides (strain ATCC 17029 / ATH 2.4.9) (Rhodobacter sphaeroides).